The chain runs to 232 residues: uncharacterized protein (232 aa).

Helical transmembrane passes span 69–91 (LISA…YILF), 104–126 (FLEP…FFAL), 139–161 (FSRF…FFFL), 166–188 (ICFT…AMLS), and 200–219 (FIYS…QLII).

Its subcellular location is the cell membrane. This is an uncharacterized protein from Bacillus subtilis (strain 168).